The chain runs to 475 residues: uncharacterized protein (475 aa).

This sequence to E.coli YihN.

This is an uncharacterized protein from Mycoplasma pneumoniae (strain ATCC 29342 / M129 / Subtype 1) (Mycoplasmoides pneumoniae).